A 179-amino-acid polypeptide reads, in one-letter code: Apoptosis regulator Bcl-2 homolog (179 aa).

Positions 76-95 match the BH1 motif; sequence ELFKDLINWGRICGFIVFSA. Residues 126–141 carry the BH2 motif; that stretch reads PWMISHGGQEEFLAFS.

This sequence belongs to the Bcl-2 family. In terms of assembly, interacts with host BECN1 (via BH3 homology domain); this interaction allows the virus to inhibit BECN1, and thus autophagy. Interacts with host BID. Interacts with host BAX.

Its subcellular location is the host mitochondrion. The protein localises to the host endoplasmic reticulum. In terms of biological role, suppresses apoptosis in host cell to promote the viral replication. Has the ability to potentially bind to all the members of the proapoptotic Bcl-2 family. Inhibits autophagy by interacting with host Beclin 1 (BECN1). This chain is Apoptosis regulator Bcl-2 homolog, found in Ornithodoros (relapsing fever ticks).